A 463-amino-acid polypeptide reads, in one-letter code: Asparagine--tRNA ligase (463 aa).

The protein belongs to the class-II aminoacyl-tRNA synthetase family. In terms of assembly, homodimer.

It is found in the cytoplasm. The enzyme catalyses tRNA(Asn) + L-asparagine + ATP = L-asparaginyl-tRNA(Asn) + AMP + diphosphate + H(+). This chain is Asparagine--tRNA ligase, found in Nostoc sp. (strain PCC 7120 / SAG 25.82 / UTEX 2576).